A 43-amino-acid chain; its full sequence is Protein PsbN (43 aa).

The helical transmembrane segment at Thr-5 to Phe-27 threads the bilayer.

The protein belongs to the PsbN family.

It is found in the plastid. It localises to the chloroplast thylakoid membrane. In terms of biological role, may play a role in photosystem I and II biogenesis. The chain is Protein PsbN from Calycanthus floridus (Eastern sweetshrub).